We begin with the raw amino-acid sequence, 258 residues long: MGVERIKAAFENGKKAFIPYVMGGDGGLEILKERIRFLDEAGASIVEIGIPFSDPVADGPTIQRAGKRALDSGVTVKGIFQALIEVREEVQIPFVLMTYLNPVLAFGKERFIENCMEAGVDGIIVPDLPYEEQDIIAPLLREANIALIPLVTVTSPIERIKKITSESEGFVYAVTVAGVTGVRQNFKDEIHSYLEKVKSHTHLPVVAGFGISTKEHVEEMVTICDGVVVGSKVIELLENEKREEICEFIQATKQKEEA.

Residues glutamate 47 and aspartate 58 each act as proton acceptor in the active site.

It belongs to the TrpA family. As to quaternary structure, tetramer of two alpha and two beta chains.

It carries out the reaction (1S,2R)-1-C-(indol-3-yl)glycerol 3-phosphate + L-serine = D-glyceraldehyde 3-phosphate + L-tryptophan + H2O. Its pathway is amino-acid biosynthesis; L-tryptophan biosynthesis; L-tryptophan from chorismate: step 5/5. Functionally, the alpha subunit is responsible for the aldol cleavage of indoleglycerol phosphate to indole and glyceraldehyde 3-phosphate. The polypeptide is Tryptophan synthase alpha chain (Bacillus thuringiensis subsp. konkukian (strain 97-27)).